Here is a 292-residue protein sequence, read N- to C-terminus: Shikimate dehydrogenase (NADP(+)) (292 aa).

Shikimate contacts are provided by residues 22 to 24 (SLS) and Ser-69. Residue Lys-73 is the Proton acceptor of the active site. Shikimate is bound by residues Asn-94 and Asp-111. Residues 135-139 (GVGGA) and Ile-236 contribute to the NADP(+) site. Tyr-238 lines the shikimate pocket. Position 260 (Gly-260) interacts with NADP(+).

This sequence belongs to the shikimate dehydrogenase family. As to quaternary structure, homodimer.

The catalysed reaction is shikimate + NADP(+) = 3-dehydroshikimate + NADPH + H(+). It participates in metabolic intermediate biosynthesis; chorismate biosynthesis; chorismate from D-erythrose 4-phosphate and phosphoenolpyruvate: step 4/7. In terms of biological role, involved in the biosynthesis of the chorismate, which leads to the biosynthesis of aromatic amino acids. Catalyzes the reversible NADPH linked reduction of 3-dehydroshikimate (DHSA) to yield shikimate (SA). The sequence is that of Shikimate dehydrogenase (NADP(+)) from Streptococcus pyogenes serotype M3 (strain ATCC BAA-595 / MGAS315).